The chain runs to 695 residues: Scarecrow-like protein 31 (695 aa).

2 disordered regions span residues 105 to 136 and 234 to 260; these read VISD…NSSN and ISKT…RSKQ. Residues 113–136 are compositionally biased toward low complexity; that stretch reads SSIPNNSITTSSSSNSGDYSNSSN. Residues 233-266 are a coiled coil; the sequence is AISKTRKNHHEREEEEDDLEEARRRSKQFAVNEE. The region spanning 306–693 is the GRAS domain; it reads AKKKSRAVDF…RILFSSSCWV (388 aa). The tract at residues 313-377 is leucine repeat I (LRI); the sequence is VDFRTLLTLC…EGSTGTMIQS (65 aa). A VHIID region spans residues 396–461; the sequence is YSVFLSASPF…PGLRKLRITG (66 aa). Residues 427-431 carry the VHIID motif; sequence LHIVD. Residues 477–509 are leucine repeat II (LRII); sequence DTGRRLTEYCKRFGVPFEYNAIASKNWETIKME. The interval 519 to 614 is PFYRE; it reads LAVNAVLRFK…GEFYGREVMN (96 aa). The interval 617-693 is SAW; the sequence is ACEGVDRVER…RILFSSSCWV (77 aa).

It belongs to the GRAS family. Expressed in seedlings, roots, cotyledons, leaves and sepals.

It is found in the nucleus. Its function is as follows. Probable transcription factor involved in plant development. This chain is Scarecrow-like protein 31 (SCL31), found in Arabidopsis thaliana (Mouse-ear cress).